The primary structure comprises 286 residues: Polyamine aminopropyltransferase (286 aa).

The PABS domain maps to 1–235 (MSDYQETLYE…GAMTFAWGAT (235 aa)). Position 30 (Q30) interacts with S-methyl-5'-thioadenosine. Spermidine-binding residues include H61 and D85. Residues E105 and 137–138 (DG) contribute to the S-methyl-5'-thioadenosine site. The Proton acceptor role is filled by D155. 155-158 (DSTD) lines the spermidine pocket. P162 contacts S-methyl-5'-thioadenosine.

Belongs to the spermidine/spermine synthase family. As to quaternary structure, homodimer or homotetramer.

The protein localises to the cytoplasm. It carries out the reaction S-adenosyl 3-(methylsulfanyl)propylamine + putrescine = S-methyl-5'-thioadenosine + spermidine + H(+). The protein operates within amine and polyamine biosynthesis; spermidine biosynthesis; spermidine from putrescine: step 1/1. Functionally, catalyzes the irreversible transfer of a propylamine group from the amino donor S-adenosylmethioninamine (decarboxy-AdoMet) to putrescine (1,4-diaminobutane) to yield spermidine. The sequence is that of Polyamine aminopropyltransferase from Pseudomonas syringae pv. tomato (strain ATCC BAA-871 / DC3000).